A 640-amino-acid chain; its full sequence is Threonine--tRNA ligase (640 aa).

The TGS domain occupies Met-1–Thr-61. Residues Asp-242 to Pro-533 form a catalytic region. 3 residues coordinate Zn(2+): Cys-333, His-384, and His-510.

It belongs to the class-II aminoacyl-tRNA synthetase family. As to quaternary structure, homodimer. Zn(2+) is required as a cofactor.

It localises to the cytoplasm. The enzyme catalyses tRNA(Thr) + L-threonine + ATP = L-threonyl-tRNA(Thr) + AMP + diphosphate + H(+). Catalyzes the attachment of threonine to tRNA(Thr) in a two-step reaction: L-threonine is first activated by ATP to form Thr-AMP and then transferred to the acceptor end of tRNA(Thr). Also edits incorrectly charged L-seryl-tRNA(Thr). The polypeptide is Threonine--tRNA ligase (Polynucleobacter asymbioticus (strain DSM 18221 / CIP 109841 / QLW-P1DMWA-1) (Polynucleobacter necessarius subsp. asymbioticus)).